Consider the following 189-residue polypeptide: Peptidyl-tRNA hydrolase (189 aa).

His15 provides a ligand contact to tRNA. The active-site Proton acceptor is the His20. Residues Phe66, Asn68, and Asn114 each contribute to the tRNA site.

It belongs to the PTH family. As to quaternary structure, monomer.

Its subcellular location is the cytoplasm. It catalyses the reaction an N-acyl-L-alpha-aminoacyl-tRNA + H2O = an N-acyl-L-amino acid + a tRNA + H(+). Functionally, hydrolyzes ribosome-free peptidyl-tRNAs (with 1 or more amino acids incorporated), which drop off the ribosome during protein synthesis, or as a result of ribosome stalling. Catalyzes the release of premature peptidyl moieties from peptidyl-tRNA molecules trapped in stalled 50S ribosomal subunits, and thus maintains levels of free tRNAs and 50S ribosomes. This is Peptidyl-tRNA hydrolase from Streptococcus equi subsp. equi (strain 4047).